Consider the following 119-residue polypeptide: Large ribosomal subunit protein uL18 (119 aa).

A compositionally biased stretch (basic and acidic residues) spans 1–10; the sequence is MKKIKEAEQR. The tract at residues 1-20 is disordered; that stretch reads MKKIKEAEQRKLRRKKRIKD.

It belongs to the universal ribosomal protein uL18 family. In terms of assembly, part of the 50S ribosomal subunit; part of the 5S rRNA/L5/L18/L25 subcomplex. Contacts the 5S and 23S rRNAs.

Functionally, this is one of the proteins that bind and probably mediate the attachment of the 5S RNA into the large ribosomal subunit, where it forms part of the central protuberance. The polypeptide is Large ribosomal subunit protein uL18 (Borreliella burgdorferi (strain ATCC 35210 / DSM 4680 / CIP 102532 / B31) (Borrelia burgdorferi)).